The following is a 1399-amino-acid chain: FYVE, RhoGEF and PH domain-containing protein 6 (1399 aa).

Disordered regions lie at residues 1–99, 138–164, 185–210, 235–281, 299–341, and 367–479; these read MTSA…KDVR, MKENLENSKNGESSKRGSSWDSSSEKC, LTQQRSPCGSPGRHRAPKKPEMNGDH, AHHN…DGIS, YTSK…NGSS, and PVDE…KKPQ. The span at 50–60 shows a compositional bias: low complexity; the sequence is PAIAPKPKVPT. A compositionally biased stretch (basic and acidic residues) spans 259-276; that stretch reads AESRGHTDSCEPENKRVA. Residues 307 to 321 are compositionally biased toward basic residues; that stretch reads KPRKTHAAARLRRQK. 2 stretches are compositionally biased toward polar residues: residues 332–341 and 377–402; these read EPGNSNNGSS and RALTGDSNSGGQDSVGSQKAVQQQTP. The span at 403-418 shows a compositional bias: low complexity; sequence SLDTDSSLTSDSSGSG. Positions 428–453 are enriched in polar residues; it reads TYTQCSTQPLSLPKQVTSACTDQPPA. Phosphoserine occurs at positions 494, 531, and 583. The interval 515 to 542 is disordered; that stretch reads RNYLHHPGPPNHGASASPFDMPNPTSEK. Disordered stretches follow at residues 631-650 and 657-678; these read QHGDVSAGHPLAREPKGLES and TGEEKRSKPTKAHSAENCSLES. S670 and S697 each carry phosphoserine. The tract at residues 768 to 840 is disordered; the sequence is APDGQLQLDP…KQDEDAGMKS (73 aa). The segment covering 802–817 has biased composition (acidic residues); that stretch reads PSDEEVINSSDEDDVS. The segment covering 821 to 838 has biased composition (basic and acidic residues); that stretch reads SKGEPDPLEDKQDEDAGM. Residues 841–1030 form the DH domain; that stretch reads KVHHIAKEIM…IEVANHANDT (190 aa). Residues 1059 to 1153 enclose the PH 1 domain; sequence VFLKEGTLMK…WLEAISSSIE (95 aa). Residue S1167 is modified to Phosphoserine. Residues 1191–1250 form an FYVE-type zinc finger; the sequence is DTRATMCMICTSEFTLTWRRHHCRACGKIVCQACSSNKYGLDYLKGQLARVCEHCFQELQ. Positions 1197, 1200, 1213, 1216, 1221, 1224, 1242, and 1245 each coordinate Zn(2+). The PH 2 domain maps to 1302-1398; it reads DSTMSGYLYR…WIDAFQEGTV (97 aa).

Its subcellular location is the cytoplasm. It is found in the cytoskeleton. Its function is as follows. May activate CDC42, a member of the Ras-like family of Rho- and Rac proteins, by exchanging bound GDP for free GTP. May play a role in regulating the actin cytoskeleton and cell shape. The chain is FYVE, RhoGEF and PH domain-containing protein 6 (Fgd6) from Mus musculus (Mouse).